The chain runs to 246 residues: 4-hydroxy-tetrahydrodipicolinate reductase (246 aa).

NAD(+) is bound by residues Gly8–Met13, Gly74–Thr76, and Ala101–Phe104. Catalysis depends on His131, which acts as the Proton donor/acceptor. Residue His132 coordinates (S)-2,3,4,5-tetrahydrodipicolinate. Lys135 (proton donor) is an active-site residue. Gly141–Thr142 lines the (S)-2,3,4,5-tetrahydrodipicolinate pocket.

The protein belongs to the DapB family.

Its subcellular location is the cytoplasm. It catalyses the reaction (S)-2,3,4,5-tetrahydrodipicolinate + NAD(+) + H2O = (2S,4S)-4-hydroxy-2,3,4,5-tetrahydrodipicolinate + NADH + H(+). The enzyme catalyses (S)-2,3,4,5-tetrahydrodipicolinate + NADP(+) + H2O = (2S,4S)-4-hydroxy-2,3,4,5-tetrahydrodipicolinate + NADPH + H(+). It functions in the pathway amino-acid biosynthesis; L-lysine biosynthesis via DAP pathway; (S)-tetrahydrodipicolinate from L-aspartate: step 4/4. Functionally, catalyzes the conversion of 4-hydroxy-tetrahydrodipicolinate (HTPA) to tetrahydrodipicolinate. The protein is 4-hydroxy-tetrahydrodipicolinate reductase of Cutibacterium acnes (strain DSM 16379 / KPA171202) (Propionibacterium acnes).